A 1358-amino-acid polypeptide reads, in one-letter code: Regulatory protein SIR4 (1358 aa).

A compositionally biased stretch (polar residues) spans 1-15 (MPNDNKTPNRSSTPK). 7 disordered regions span residues 1–98 (MPND…PHSN), 252–277 (SLSV…SPGI), 356–466 (HDEK…PPEI), 498–544 (VQGE…ISNG), 677–726 (ASTE…EDEQ), 752–787 (VSDS…DLDT), and 913–970 (HSQE…ENLS). Over residues 26 to 39 (KIPEREEKSNEVKT) the composition is skewed to basic and acidic residues. 2 stretches are compositionally biased toward polar residues: residues 49–66 (KSKN…SPHQ) and 75–96 (HKQL…SFPH). Residues 373-388 (QKMKEDADLKRMEILK) show a composition bias toward basic and acidic residues. The segment covering 428 to 437 (QENNYNSTSR) has biased composition (polar residues). The span at 452–464 (KNGENKKIGKRPP) shows a compositional bias: basic and acidic residues. The segment covering 507–517 (RNNTLNVTPSK) has biased composition (polar residues). Residue S692 is modified to Phosphoserine. Over residues 706–720 (FPVSLSQPSKKSFAN) the composition is skewed to polar residues. A compositionally biased stretch (acidic residues) spans 754 to 766 (DSDDSSSDNDSLT). The segment covering 777–787 (NEIKVTNDLDT) has biased composition (basic and acidic residues). Polar residues predominate over residues 916 to 932 (EQNSSSAKPSQIPTVSS). Residue K1128 forms a Glycyl lysine isopeptide (Lys-Gly) (interchain with G-Cter in SUMO) linkage. The stretch at 1271-1347 (LSFVDIVLSK…DAKINKLMEK (77 aa)) forms a coiled coil.

In terms of assembly, homodimer. Interacts with MPS3. Interacts with RIS1. Interacts with SIR1, SIR2 and SIR3. Interacts with YKU80. Interacts with UBP10. Interacts with RAP1 (via C-terminus).

It is found in the nucleus. In terms of biological role, the proteins SIR1 through SIR4 are required for transcriptional repression of the silent mating type loci, HML and HMR. The proteins SIR2 through SIR4 repress mulitple loci by modulating chromatin structure. Involves the compaction of chromatin fiber into a more condensed form. In Saccharomyces cerevisiae (strain ATCC 204508 / S288c) (Baker's yeast), this protein is Regulatory protein SIR4 (SIR4).